A 278-amino-acid chain; its full sequence is MLLELLKAIFLGIIEGVTEWLPVSSTGHLILVQEFVKLNQSKNFLEMFNIVIQLGAILAVMTIYFKKLNPFQPGKTKRDIQLTWQLWAKVVIACIPSILIAVPLDNWFEAHFNFMVPIAIALIVYGIAFIWIENRNRGIEPQVTDLAKMSYKTALLIGCFQVLSIVPGTSRSGATILGAIILGTSRSVAADFTFFLGIPTMFGYSGLKAVKYFLDGNSLNMEQVWILLVASVTAYLVSLVVIRFLTDFVKKHDFTVFGYYRIILGAILLVYAFITFLF.

The next 6 membrane-spanning stretches (helical) occupy residues 44–64 (FLEMFNIVIQLGAILAVMTIY), 84–104 (WQLWAKVVIACIPSILIAVPL), 112–132 (FNFMVPIAIALIVYGIAFIWI), 187–207 (SVAADFTFFLGIPTMFGYSGL), 224–244 (VWILLVASVTAYLVSLVVIRF), and 254–274 (FTVFGYYRIILGAILLVYAFI).

It belongs to the UppP family.

The protein resides in the cell membrane. The enzyme catalyses di-trans,octa-cis-undecaprenyl diphosphate + H2O = di-trans,octa-cis-undecaprenyl phosphate + phosphate + H(+). In terms of biological role, catalyzes the dephosphorylation of undecaprenyl diphosphate (UPP). Confers resistance to bacitracin. This Streptococcus suis (strain 98HAH33) protein is Undecaprenyl-diphosphatase.